We begin with the raw amino-acid sequence, 155 residues long: Ribosome maturation factor RimP (155 aa).

The protein belongs to the RimP family.

It is found in the cytoplasm. Functionally, required for maturation of 30S ribosomal subunits. The chain is Ribosome maturation factor RimP from Listeria monocytogenes serovar 1/2a (strain ATCC BAA-679 / EGD-e).